Reading from the N-terminus, the 615-residue chain is Probable inactive purple acid phosphatase 24 (615 aa).

The signal sequence occupies residues 1–26; it reads MARVLGVLLCLLALFSSSLCLDHANG. N-linked (GlcNAc...) asparagine glycosylation is found at asparagine 129, asparagine 267, and asparagine 275. Aspartate 297 contributes to the Fe cation binding site. N-linked (GlcNAc...) asparagine glycosylation occurs at asparagine 318. Fe cation is bound by residues aspartate 338 and tyrosine 341. Aspartate 338 contacts Zn(2+). Residues asparagine 371, histidine 460, and histidine 502 each coordinate Zn(2+). Residue asparagine 371 participates in substrate binding. Residue 502-504 coordinates substrate; it reads HVH. Position 504 (histidine 504) interacts with Fe cation. Asparagine 592 carries N-linked (GlcNAc...) asparagine glycosylation.

The protein belongs to the metallophosphoesterase superfamily. Purple acid phosphatase family. As to quaternary structure, homodimer. Requires Fe cation as cofactor. It depends on Zn(2+) as a cofactor. In terms of tissue distribution, specifically expressed in flowers.

The protein localises to the secreted. The protein is Probable inactive purple acid phosphatase 24 (PAP24) of Arabidopsis thaliana (Mouse-ear cress).